The primary structure comprises 242 residues: Triosephosphate isomerase (242 aa).

9–11 serves as a coordination point for substrate; the sequence is NWK. Histidine 96 serves as the catalytic Electrophile. Glutamate 165 acts as the Proton acceptor in catalysis. Substrate-binding positions include glycine 171, serine 204, and 225–226; that span reads GG.

Belongs to the triosephosphate isomerase family. As to quaternary structure, homodimer.

It is found in the cytoplasm. The catalysed reaction is D-glyceraldehyde 3-phosphate = dihydroxyacetone phosphate. The protein operates within carbohydrate biosynthesis; gluconeogenesis. It functions in the pathway carbohydrate degradation; glycolysis; D-glyceraldehyde 3-phosphate from glycerone phosphate: step 1/1. In terms of biological role, involved in the gluconeogenesis. Catalyzes stereospecifically the conversion of dihydroxyacetone phosphate (DHAP) to D-glyceraldehyde-3-phosphate (G3P). In Synechocystis sp. (strain ATCC 27184 / PCC 6803 / Kazusa), this protein is Triosephosphate isomerase.